Reading from the N-terminus, the 168-residue chain is Thiol peroxidase (168 aa).

Residues 19 to 168 form the Thioredoxin domain; that stretch reads PQAGSKAQTF…YEAALAVLKA (150 aa). Cysteine 61 serves as the catalytic Cysteine sulfenic acid (-SOH) intermediate. An intrachain disulfide couples cysteine 61 to cysteine 95.

Belongs to the peroxiredoxin family. Tpx subfamily. As to quaternary structure, homodimer.

The enzyme catalyses a hydroperoxide + [thioredoxin]-dithiol = an alcohol + [thioredoxin]-disulfide + H2O. Functionally, thiol-specific peroxidase that catalyzes the reduction of hydrogen peroxide and organic hydroperoxides to water and alcohols, respectively. Plays a role in cell protection against oxidative stress by detoxifying peroxides. This chain is Thiol peroxidase, found in Shigella dysenteriae.